A 320-amino-acid chain; its full sequence is ATP-dependent 6-phosphofructokinase (320 aa).

G11 is an ATP binding site. 21 to 25 (RAVTK) lines the ADP pocket. ATP is bound by residues 72–73 (RF) and 102–105 (GDGS). Mg(2+) is bound at residue D103. Residue 125–127 (TID) participates in substrate binding. Residue D127 is the Proton acceptor of the active site. Residue R154 coordinates ADP. Substrate is bound by residues R162 and 169-171 (MGR). Residues 185-187 (GAD) and 213-215 (KDH) each bind ADP. Substrate-binding positions include E222, R243, and 249-252 (HMQR).

It belongs to the phosphofructokinase type A (PFKA) family. ATP-dependent PFK group I subfamily. Prokaryotic clade 'B1' sub-subfamily. In terms of assembly, homotetramer. Mg(2+) serves as cofactor.

It localises to the cytoplasm. It catalyses the reaction beta-D-fructose 6-phosphate + ATP = beta-D-fructose 1,6-bisphosphate + ADP + H(+). The protein operates within carbohydrate degradation; glycolysis; D-glyceraldehyde 3-phosphate and glycerone phosphate from D-glucose: step 3/4. Allosterically activated by ADP and other diphosphonucleosides, and allosterically inhibited by phosphoenolpyruvate. Functionally, catalyzes the phosphorylation of D-fructose 6-phosphate to fructose 1,6-bisphosphate by ATP, the first committing step of glycolysis. This is ATP-dependent 6-phosphofructokinase from Lactobacillus acidophilus (strain ATCC 700396 / NCK56 / N2 / NCFM).